The following is a 114-amino-acid chain: Ribosome-binding factor A (114 aa).

It belongs to the RbfA family. Monomer. Binds 30S ribosomal subunits, but not 50S ribosomal subunits or 70S ribosomes.

The protein localises to the cytoplasm. One of several proteins that assist in the late maturation steps of the functional core of the 30S ribosomal subunit. Associates with free 30S ribosomal subunits (but not with 30S subunits that are part of 70S ribosomes or polysomes). Required for efficient processing of 16S rRNA. May interact with the 5'-terminal helix region of 16S rRNA. The sequence is that of Ribosome-binding factor A from Macrococcus caseolyticus (strain JCSC5402) (Macrococcoides caseolyticum).